The sequence spans 256 residues: Calsenilin (256 aa).

Residues 1 to 30 (MQRAKEVMKVSDGSLLGEPGRTPLSKKEGV) form a disordered region. Position 14 is a phosphoserine (Ser-14). Lys-26 participates in a covalent cross-link: Glycyl lysine isopeptide (Lys-Gly) (interchain with G-Cter in SUMO1). Residues Cys-45 and Cys-46 are each lipidated (S-palmitoyl cysteine). Phosphoserine is present on residues Ser-60 and Ser-63. The 57-residue stretch at 67 to 123 (LELSAVRHQPEGLDQLQAQTKFTKKELQSLYRGFKNECPTGLVDEDTFKLIYSQFFP) folds into the EF-hand 1; degenerate domain. Lys-90 participates in a covalent cross-link: Glycyl lysine isopeptide (Lys-Gly) (interchain with G-Cter in SUMO1). 3 consecutive EF-hand domains span residues 126–161 (DATTYAHFLFNAFDADGNGAIRFEDFVVGLSILLRG), 162–197 (TVHEKLKWAFNLYDINKDGYITKEEMLAIMKSIYDM), and 210–245 (APLEHVERFFQKMDRNQDGVVTIDEFLETCQKDENI). Residues Asp-175, Asn-177, Asp-179, Tyr-181, Glu-186, Asp-223, Asn-225, Asp-227, and Glu-234 each coordinate Ca(2+). An interaction with KCND2 region spans residues 243 to 256 (ENIMSSMQLFENVI).

It belongs to the recoverin family. In terms of assembly, binds to DNA as a homomultimer. Dimerization is induced by binding to calcium. Interacts with the C-terminus of PSEN1 and PSEN2 and with PSEN2 CTF subunit. Associates with KCN1. Component of heteromultimeric potassium channels. Identified in potassium channel complexes containing KCND1, KCND2, KCND3, KCNIP1, KCNIP2, KCNIP3, KCNIP4, DPP6 and DPP10. Interacts with KCND2 and KCND3. Post-translationally, palmitoylated. Palmitoylation enhances association with the plasma membrane. In terms of processing, proteolytically cleaved by caspase-3.

It localises to the cytoplasm. The protein localises to the cell membrane. The protein resides in the endoplasmic reticulum. It is found in the golgi apparatus. Its subcellular location is the nucleus. Functionally, regulatory subunit of Kv4/D (Shal)-type voltage-gated rapidly inactivating A-type potassium channels, such as KCND2/Kv4.2 and KCND3/Kv4.3. Modulates channel expression at the cell membrane, gating characteristics, inactivation kinetics and rate of recovery from inactivation in a calcium-dependent and isoform-specific manner. May play a role in the regulation of PSEN2 proteolytic processing and apoptosis. Together with PSEN2 involved in modulation of amyloid-beta formation. In terms of biological role, calcium-dependent transcriptional repressor that binds to the DRE element of genes including PDYN and FOS. Affinity for DNA is reduced upon binding to calcium and enhanced by binding to magnesium. Seems to be involved in nociception. In Bos taurus (Bovine), this protein is Calsenilin (KCNIP3).